Consider the following 362-residue polypeptide: EARP-interacting protein 1 (362 aa).

4 WD repeats span residues 61-108 (HPAG…RTLE), 206-246 (AHIH…SALT), 250-290 (PHAH…SEQQ), and 319-359 (EHED…KYAL).

This sequence belongs to the WD repeat EIPR1 family. As to expression, expressed in the hypodermis and the pharynx.

It is found in the cytoplasm. Plays a role in the trafficking of cargo to dense-core vesicles, probably through association with the endosome-associated recycling protein (EARP) complex. Important for neuronal function. In Caenorhabditis elegans, this protein is EARP-interacting protein 1.